Reading from the N-terminus, the 436-residue chain is GTPase Der (436 aa).

EngA-type G domains follow at residues 4–167 and 176–351; these read PVVA…KNLP and VQFC…ENHA. Residues 10 to 17, 57 to 61, 119 to 122, 182 to 189, 229 to 233, and 294 to 297 contribute to the GTP site; these read GRPNVGKS, DTGGI, NKLD, DTAGM, and NKWD. The region spanning 352-436 is the KH-like domain; that stretch reads MRVQTNILND…PIKIFARARK (85 aa).

It belongs to the TRAFAC class TrmE-Era-EngA-EngB-Septin-like GTPase superfamily. EngA (Der) GTPase family. As to quaternary structure, associates with the 50S ribosomal subunit.

Its function is as follows. GTPase that plays an essential role in the late steps of ribosome biogenesis. The sequence is that of GTPase Der from Bacillus pumilus (strain SAFR-032).